The sequence spans 287 residues: Protease HtpX (287 aa).

The next 2 membrane-spanning stretches (helical) occupy residues 4-24 and 33-53; these read IFLL…VMSI and GGLL…SLAI. A Zn(2+)-binding site is contributed by histidine 139. Residue glutamate 140 is part of the active site. Residue histidine 143 coordinates Zn(2+). Transmembrane regions (helical) follow at residues 154 to 174 and 195 to 215; these read LIQG…AGII and AVVF…VAYF. Glutamate 220 provides a ligand contact to Zn(2+).

This sequence belongs to the peptidase M48B family. Zn(2+) serves as cofactor.

It is found in the cell inner membrane. This is Protease HtpX from Shewanella halifaxensis (strain HAW-EB4).